The sequence spans 173 residues: Crossover junction endodeoxyribonuclease RuvC (173 aa).

Residues Asp8, Glu67, and Asp139 contribute to the active site. Mg(2+) contacts are provided by Asp8, Glu67, and Asp139.

Belongs to the RuvC family. Homodimer which binds Holliday junction (HJ) DNA. The HJ becomes 2-fold symmetrical on binding to RuvC with unstacked arms; it has a different conformation from HJ DNA in complex with RuvA. In the full resolvosome a probable DNA-RuvA(4)-RuvB(12)-RuvC(2) complex forms which resolves the HJ. Requires Mg(2+) as cofactor.

The protein localises to the cytoplasm. The catalysed reaction is Endonucleolytic cleavage at a junction such as a reciprocal single-stranded crossover between two homologous DNA duplexes (Holliday junction).. Its function is as follows. The RuvA-RuvB-RuvC complex processes Holliday junction (HJ) DNA during genetic recombination and DNA repair. Endonuclease that resolves HJ intermediates. Cleaves cruciform DNA by making single-stranded nicks across the HJ at symmetrical positions within the homologous arms, yielding a 5'-phosphate and a 3'-hydroxyl group; requires a central core of homology in the junction. The consensus cleavage sequence is 5'-(A/T)TT(C/G)-3'. Cleavage occurs on the 3'-side of the TT dinucleotide at the point of strand exchange. HJ branch migration catalyzed by RuvA-RuvB allows RuvC to scan DNA until it finds its consensus sequence, where it cleaves and resolves the cruciform DNA. This Psychromonas ingrahamii (strain DSM 17664 / CCUG 51855 / 37) protein is Crossover junction endodeoxyribonuclease RuvC.